The following is a 253-amino-acid chain: POU Class 2 homeobox-associating factor 3 (253 aa).

One can recognise an OCA domain in the interval 5 to 27 (PKVYQGVRVKMTVKELLQQRRAH).

This sequence belongs to the POU2AF family. In terms of assembly, interacts with POU2F3 in a DNA-dependent manner; this interaction increases POU2F3 transactivation activity. In terms of tissue distribution, expressed in tuft cells.

It localises to the cytoplasm. The protein resides in the nucleus. Its function is as follows. Transcriptional coactivator that specifically associates with POU2F3. This complex drives the development of tuft cells, a rare a rare chemosensory cells that coordinate immune and neural functions within mucosal epithelial tissues. This chain is POU Class 2 homeobox-associating factor 3, found in Mus musculus (Mouse).